The chain runs to 574 residues: Sulfate adenylyltransferase (574 aa).

The N-terminal stretch occupies residues 1–169 (MANTPHGGVL…IEAVNKLNHY (169 aa)). The interval 170-394 (DYVALRYTPA…LRESNPPRAS (225 aa)) is catalytic. Gln197 lines the sulfate pocket. Residues 197 to 200 (QTRN) and 291 to 294 (GRDH) each bind ATP. Residues Thr198, Arg199, and Asn200 contribute to the active site. Position 199 (Arg199) interacts with sulfate. Residue Ala295 coordinates sulfate. Residue Val333 coordinates ATP. Positions 395–574 (QGFTIFLTGY…LESEGYFERL (180 aa)) are allosteric regulation domain; adenylyl-sulfate kinase-like. Residues 434–437 (DTVR), Arg451, 477–478 (IA), and Arg516 contribute to the 3'-phosphoadenylyl sulfate site.

This sequence in the N-terminal section; belongs to the sulfate adenylyltransferase family. It in the C-terminal section; belongs to the APS kinase family. As to quaternary structure, homohexamer. Dimer of trimers.

The protein resides in the cytoplasm. The enzyme catalyses sulfate + ATP + H(+) = adenosine 5'-phosphosulfate + diphosphate. It participates in sulfur metabolism; hydrogen sulfide biosynthesis; sulfite from sulfate: step 1/3. Its activity is regulated as follows. Allosterically inhibited by 3'-phosphoadenosine 5'-phosphosulfate (PAPS). Functionally, catalyzes the first intracellular reaction of sulfate assimilation, forming adenosine-5'-phosphosulfate (APS) from inorganic sulfate and ATP. Plays an important role in sulfate activation as a component of the biosynthesis pathway of sulfur-containing amino acids. This Aspergillus niger protein is Sulfate adenylyltransferase.